Consider the following 214-residue polypeptide: Guanylate kinase (214 aa).

Residues 6 to 192 (GTLYIISAPS…ALEDLKSIFR (187 aa)) form the Guanylate kinase-like domain. 13-20 (APSGAGKT) contacts ATP.

The protein belongs to the guanylate kinase family.

The protein localises to the cytoplasm. It catalyses the reaction GMP + ATP = GDP + ADP. Its function is as follows. Essential for recycling GMP and indirectly, cGMP. This is Guanylate kinase from Pseudomonas syringae pv. tomato (strain ATCC BAA-871 / DC3000).